The primary structure comprises 505 residues: MAAELVEAMNMVKSFRVSDLQTLLASMGRSKSGLKQDLVGRALRLVQTEYSPELLKNVRQLYETRFPKASAWLAARRPETVAVNYPALNSSPRGTGQGTDYLNGIPKPAPPPAAEVKLVPLPFYHNLETLLPPTELVAQNSEKLQESQCVFDLTPNQVDQIRNSSELRPGMKSVQVVLRICYTDSIGVQEDQYPPNIAVKVNQSYCHVPGYYPSNKPGVEPRRPCRPVNITPWLHLSTVTNRVTITWGNFGKRYSVAVYLVRVFTSGELFNQLKHCSVENPDRCRERIQDKLRFDPESEIATTGLRVSLICPLVKMRLGVPCRVLTCAHLQCFDAVFFLQMNEKKPTWTCPVCDKPAPFELLTIDGLLSEILKETPEDVEEIEYLTDGSWRPIRDDKEKERERENSRTPDYPVVDICVPEANGHSPAHSGTNQTGKSGSGGASAGTGSTSGGSGGGTVVDLTLDDSSEEEGGGGAEDSEETDDSQDSPAPKRGRYDYDKDLVTAY.

The SAP domain occupies 12–46 (VKSFRVSDLQTLLASMGRSKSGLKQDLVGRALRLV). The LXXLL motif motif lies at 20–24 (LQTLL). Residue Lys35 forms a Glycyl lysine isopeptide (Lys-Gly) (interchain with G-Cter in SUMO); alternate linkage. A Glycyl lysine isopeptide (Lys-Gly) (interchain with G-Cter in SUMO2); alternate cross-link involves residue Lys35. Glycyl lysine isopeptide (Lys-Gly) (interchain with G-Cter in SUMO2) cross-links involve residues Lys56 and Lys68. The 161-residue stretch at 104 to 264 (GIPKPAPPPA…SVAVYLVRVF (161 aa)) folds into the PINIT domain. An SP-RING-type zinc finger spans residues 296–381 (PESEIATTGL…LKETPEDVEE (86 aa)). 4 residues coordinate Zn(2+): Cys327, His329, Cys350, and Cys353. Positions 374–505 (ETPEDVEEIE…DYDKDLVTAY (132 aa)) are required for nuclear localization. Positions 395-407 (DDKEKERERENSR) are enriched in basic and acidic residues. The tract at residues 395-505 (DDKEKERERE…DYDKDLVTAY (111 aa)) is disordered. The span at 437–457 (SGSGGASAGTGSTSGGSGGGT) shows a compositional bias: gly residues. A compositionally biased stretch (acidic residues) spans 462–485 (TLDDSSEEEGGGGAEDSEETDDSQ). Residues 493–505 (GRYDYDKDLVTAY) are compositionally biased toward basic and acidic residues.

The protein belongs to the PIAS family. Post-translationally, sumoylated. Lys-35 is the main site of sumoylation. In terms of tissue distribution, highly expressed in spleen, liver, and brain. Expressed at lower levels in heart, intestine, kidney, gill, skin, and muscle.

The protein resides in the nucleus. It carries out the reaction S-ubiquitinyl-[E2 ubiquitin-conjugating enzyme]-L-cysteine + [acceptor protein]-L-lysine = [E2 ubiquitin-conjugating enzyme]-L-cysteine + N(6)-ubiquitinyl-[acceptor protein]-L-lysine.. The protein operates within protein modification; protein sumoylation. Functions as an E3-type small ubiquitin-like modifier (SUMO) ligase. May play a role as a transcriptional coregulator in various cellular pathways. Catalyzes conjugation of SUMO2 to KAT5 in response to DNA damage, facilitating repair of DNA double-strand breaks (DSBs) via homologous recombination (HR). Mediates sumoylation of PARP1 in response to PARP1 trapping to chromatin. Negatively regulates induction of interferon phi 1 (ifnphi1) mediated by mavs and ticam1/trif. Also inhibits ifnphi1-mediated activation of the interferon-stimulated genes (ISGs) pkz and cd40, and to a lesser extent rsad2 and isg15. May inhibit ticam1/trif-mediated activation of NF-kappa-B. The chain is E3 SUMO-protein ligase PIAS4-A from Danio rerio (Zebrafish).